The chain runs to 156 residues: Small ribosomal subunit protein uS7 (156 aa).

It belongs to the universal ribosomal protein uS7 family. In terms of assembly, part of the 30S ribosomal subunit. Contacts proteins S9 and S11.

Functionally, one of the primary rRNA binding proteins, it binds directly to 16S rRNA where it nucleates assembly of the head domain of the 30S subunit. Is located at the subunit interface close to the decoding center, probably blocks exit of the E-site tRNA. The sequence is that of Small ribosomal subunit protein uS7 from Pseudomonas fluorescens (strain ATCC BAA-477 / NRRL B-23932 / Pf-5).